A 469-amino-acid chain; its full sequence is Ubiquitin carboxyl-terminal hydrolase MINDY-1 (469 aa).

The tract at residues 1–85 is disordered; it reads MEYHQPEDPA…APPGPTLGTL (85 aa). Positions 23–53 are enriched in basic and acidic residues; sequence ENHEVLAGPDEHPQDTDARDADGEAREREPA. Over residues 66 to 76 the composition is skewed to low complexity; it reads LESPLPEASSA. Serine 103 carries the post-translational modification Phosphoserine. The Nucleophile role is filled by cysteine 137. Histidine 319 functions as the Proton acceptor in the catalytic mechanism. A ubiquitin-binding domain (UBD) region spans residues 388-426; that stretch reads QVDQDYLIALSLQQQQPRGPLGLTDLELAQQLQQEEYQQ. Phosphoserine is present on serine 441. Residues 441–469 form a disordered region; it reads SLQGRGATSGRPAGERRQRPKHESDCILL. Over residues 453 to 469 the composition is skewed to basic and acidic residues; that stretch reads AGERRQRPKHESDCILL.

Belongs to the MINDY deubiquitinase family. FAM63 subfamily.

It carries out the reaction Thiol-dependent hydrolysis of ester, thioester, amide, peptide and isopeptide bonds formed by the C-terminal Gly of ubiquitin (a 76-residue protein attached to proteins as an intracellular targeting signal).. Functionally, hydrolase that can specifically remove 'Lys-48'-linked conjugated ubiquitin from proteins. Has exodeubiquitinase activity and has a preference for long polyubiquitin chains. May play a regulatory role at the level of protein turnover. The polypeptide is Ubiquitin carboxyl-terminal hydrolase MINDY-1 (Homo sapiens (Human)).